Here is a 127-residue protein sequence, read N- to C-terminus: Glycine cleavage system H protein (127 aa).

A Lipoyl-binding domain is found at 22–104 (EAVIGITQFA…YTDGWMVRVK (83 aa)). Residue lysine 63 is modified to N6-lipoyllysine.

It belongs to the GcvH family. The glycine cleavage system is composed of four proteins: P, T, L and H. Requires (R)-lipoate as cofactor.

The glycine cleavage system catalyzes the degradation of glycine. The H protein shuttles the methylamine group of glycine from the P protein to the T protein. This is Glycine cleavage system H protein from Nitratidesulfovibrio vulgaris (strain DSM 19637 / Miyazaki F) (Desulfovibrio vulgaris).